Here is a 283-residue protein sequence, read N- to C-terminus: Elongation factor Ts (283 aa).

The segment at 80–83 (TDFV) is involved in Mg(2+) ion dislocation from EF-Tu.

The protein belongs to the EF-Ts family.

The protein resides in the cytoplasm. In terms of biological role, associates with the EF-Tu.GDP complex and induces the exchange of GDP to GTP. It remains bound to the aminoacyl-tRNA.EF-Tu.GTP complex up to the GTP hydrolysis stage on the ribosome. This is Elongation factor Ts from Salmonella choleraesuis (strain SC-B67).